A 798-amino-acid polypeptide reads, in one-letter code: Type 2 DNA topoisomerase 6 subunit B (798 aa).

ATP is bound by residues Asn-60, Asp-91, Ser-112–Arg-113, and Gly-122–Ser-129. A compositionally biased stretch (basic and acidic residues) spans Glu-221–Glu-233. The segment at Glu-221–His-245 is disordered. Lys-629 contributes to the ATP binding site.

The protein belongs to the TOP6B family. As to quaternary structure, homodimer. Heterotetramer of two Top6A and two Top6B chains.

The enzyme catalyses ATP-dependent breakage, passage and rejoining of double-stranded DNA.. Relaxes both positive and negative superturns and exhibits a strong decatenase activity. The protein is Type 2 DNA topoisomerase 6 subunit B of Natronomonas pharaonis (strain ATCC 35678 / DSM 2160 / CIP 103997 / JCM 8858 / NBRC 14720 / NCIMB 2260 / Gabara) (Halobacterium pharaonis).